We begin with the raw amino-acid sequence, 200 residues long: NADH-quinone oxidoreductase subunit C (200 aa).

This sequence belongs to the complex I 30 kDa subunit family. NDH-1 is composed of 14 different subunits. Subunits NuoB, C, D, E, F, and G constitute the peripheral sector of the complex.

Its subcellular location is the cell inner membrane. It carries out the reaction a quinone + NADH + 5 H(+)(in) = a quinol + NAD(+) + 4 H(+)(out). Functionally, NDH-1 shuttles electrons from NADH, via FMN and iron-sulfur (Fe-S) centers, to quinones in the respiratory chain. The immediate electron acceptor for the enzyme in this species is believed to be ubiquinone. Couples the redox reaction to proton translocation (for every two electrons transferred, four hydrogen ions are translocated across the cytoplasmic membrane), and thus conserves the redox energy in a proton gradient. This chain is NADH-quinone oxidoreductase subunit C, found in Paraburkholderia xenovorans (strain LB400).